The sequence spans 432 residues: Gamma-glutamyl phosphate reductase (432 aa).

Belongs to the gamma-glutamyl phosphate reductase family.

The protein resides in the cytoplasm. The catalysed reaction is L-glutamate 5-semialdehyde + phosphate + NADP(+) = L-glutamyl 5-phosphate + NADPH + H(+). It participates in amino-acid biosynthesis; L-proline biosynthesis; L-glutamate 5-semialdehyde from L-glutamate: step 2/2. Functionally, catalyzes the NADPH-dependent reduction of L-glutamate 5-phosphate into L-glutamate 5-semialdehyde and phosphate. The product spontaneously undergoes cyclization to form 1-pyrroline-5-carboxylate. This chain is Gamma-glutamyl phosphate reductase, found in Methylorubrum extorquens (strain PA1) (Methylobacterium extorquens).